A 269-amino-acid chain; its full sequence is Protein OPG079 (269 aa).

The protein belongs to the orthopoxvirus OPG079 family. In terms of assembly, homoomultimer (Potential). Interacts with the small subunit of ribonucleotide reductase. Interacts with host FAM111A; this interaction protomtes OPG079 degradation through autophagy.

Its subcellular location is the host cytoplasm. Functionally, plays an essential role in viral DNA replication. Binds to ssDNA with high affinity and localizes to cytoplasmic factories where nascent viral genomes accumulate. May disrupt loops, hairpins and other secondary structures present on ssDNA to reduce and eliminate pausing of viral DNA polymerase at specific sites during elongation. The polypeptide is Protein OPG079 (OPG079) (Vaccinia virus (strain Copenhagen) (VACV)).